The sequence spans 300 residues: Cation-efflux pump FieF (300 aa).

4 consecutive transmembrane segments (helical) span residues Ala12 to Trp32, Ile39 to Val59, Ala82 to Ile102, and Pro114 to Phe134. Residues Asp45 and Asp49 each contribute to the Zn(2+) site. Positions 153 and 157 each coordinate Zn(2+). 2 helical membrane passes run Ser156–His176 and Ala178–Gly198.

Belongs to the cation diffusion facilitator (CDF) transporter (TC 2.A.4) family. FieF subfamily. Homodimer.

The protein localises to the cell inner membrane. The enzyme catalyses Zn(2+)(in) + H(+)(out) = Zn(2+)(out) + H(+)(in). It carries out the reaction Cd(2+)(in) + H(+)(out) = Cd(2+)(out) + H(+)(in). It catalyses the reaction Fe(2+)(in) + H(+)(out) = Fe(2+)(out) + H(+)(in). Functionally, divalent metal cation transporter which exports Zn(2+), Cd(2+) and possibly Fe(2+). May be involved in zinc and iron detoxification by efflux. The protein is Cation-efflux pump FieF of Escherichia coli O157:H7 (strain EC4115 / EHEC).